The primary structure comprises 265 residues: SEYASELAQADNNVLAPAPLTFGGRGDIRTSKAVKSISESTVVSNYDEDNFRSCCALFGEAQLKCFQMHYSPNAPSSQMESEGSANPSTIGSVSEGYVSESQGQESERSESEGSEGEDSEETEGAEEPHEQMESEGGDQEESEGAEQPQEQMESEGQEPESEEDVDSGEITDGSDMNMPGPGSSDGGVPLGLTEVDEQTSDGEEPEEPEEPGGEQGPHEQMESEGEGNESEEEEVEEPQEVIESEGQQSESEDPEKEEEEEERSG.

A Cell attachment site motif is present at residues 25–27 (RGD). The segment at 71–265 (SPNAPSSQME…KEEEEEERSG (195 aa)) is disordered. The segment covering 73–92 (NAPSSQMESEGSANPSTIGS) has biased composition (polar residues). A run of 4 repeats spans residues 75 to 94 (PSSQ…GSVS), 105 to 124 (ESER…ETEG), 128 to 147 (PHEQ…GAEQ), and 148 to 167 (PQEQ…DVDS). The tract at residues 75-257 (PSSQMESEGS…QSESEDPEKE (183 aa)) is 6 X approximate repeats. Acidic residues-rich tracts occupy residues 112 to 125 (EGSE…TEGA), 133 to 144 (ESEGGDQEESEG), 152 to 169 (MESE…DSGE), 194 to 212 (EVDE…EEPG), 222 to 243 (ESEG…EVIE), and 250 to 265 (ESED…ERSG). 2 tandem repeats follow at residues 217-236 (PHEQ…EEVE) and 238-257 (PQEV…PEKE). N228 is a glycosylation site (N-linked (GlcNAc...) asparagine).

In terms of tissue distribution, first expressed in the vegetal plate and progressively the expression becomes restricted to a subset of endodermal cells as development proceeds.

Its function is as follows. May be an adhesion molecule involved in gastrulation of the sea urchin embryo. The sequence is that of Protein ENDO16 (ENDO16) from Strongylocentrotus purpuratus (Purple sea urchin).